Here is a 630-residue protein sequence, read N- to C-terminus: 1-deoxy-D-xylulose-5-phosphate synthase (630 aa).

Residues His-72 and 113–115 (GHS) contribute to the thiamine diphosphate site. Asp-144 is a binding site for Mg(2+). Thiamine diphosphate-binding positions include 145 to 146 (GA), Asn-173, Tyr-284, and Glu-367. Asn-173 serves as a coordination point for Mg(2+).

This sequence belongs to the transketolase family. DXPS subfamily. Homodimer. Mg(2+) is required as a cofactor. Thiamine diphosphate serves as cofactor.

The catalysed reaction is D-glyceraldehyde 3-phosphate + pyruvate + H(+) = 1-deoxy-D-xylulose 5-phosphate + CO2. It functions in the pathway metabolic intermediate biosynthesis; 1-deoxy-D-xylulose 5-phosphate biosynthesis; 1-deoxy-D-xylulose 5-phosphate from D-glyceraldehyde 3-phosphate and pyruvate: step 1/1. Functionally, catalyzes the acyloin condensation reaction between C atoms 2 and 3 of pyruvate and glyceraldehyde 3-phosphate to yield 1-deoxy-D-xylulose-5-phosphate (DXP). This chain is 1-deoxy-D-xylulose-5-phosphate synthase, found in Bacillus cereus (strain B4264).